We begin with the raw amino-acid sequence, 198 residues long: Tumor necrosis factor receptor superfamily member 22 (198 aa).

Residues 1-20 (MFGFFCSLVSSLSRWFLWRR) are Cytoplasmic-facing. A helical; Signal-anchor for type II membrane protein transmembrane segment spans residues 21–41 (LLLLLLLLLLNLPLQVKFAML). At 42–198 (ELHSFKCPAG…SVVVFRIIRR (157 aa)) the chain is on the extracellular side. TNFR-Cys repeat units lie at residues 47 to 82 (KCPA…QGQC), 84 to 124 (KCHP…DRKC), and 125 to 165 (QCRT…NTVC). 9 disulfides stabilise this stretch: C48–C59, C60–C73, C63–C82, C85–C100, C103–C116, C106–C124, C126–C141, C144–C157, and C147–C165. N62 is a glycosylation site (N-linked (GlcNAc...) asparagine). A glycan (N-linked (GlcNAc...) asparagine) is linked at N158.

Ubiquitous.

The protein resides in the cell membrane. It localises to the secreted. Receptor for the cytotoxic ligand TNFSF10/TRAIL. Lacks a cytoplasmic death domain and hence is not capable of inducing apoptosis. Protects cells against TRAIL mediated apoptosis possibly through ligand competition. Cannot induce the NF-kappa-B pathway. The chain is Tumor necrosis factor receptor superfamily member 22 (Tnfrsf22) from Mus musculus (Mouse).